The sequence spans 635 residues: Dihydrolipoyllysine-residue acetyltransferase component of pyruvate dehydrogenase complex, mitochondrial (635 aa).

The Lipoyl-binding 1 domain occupies 83–160; the sequence is GKEITMPALS…EINKPIAIIV (78 aa). An N6-lipoyllysine modification is found at lysine 124. Positions 171 to 204 are disordered; that stretch reads KNYKPSSQASSTPVQEEAPKPKQEAPKKSTKTYP. A compositionally biased stretch (polar residues) spans 174 to 184; that stretch reads KPSSQASSTPV. Residues 187-197 are compositionally biased toward basic and acidic residues; sequence EAPKPKQEAPK. In terms of domain architecture, Lipoyl-binding 2 spans 206 to 283; the sequence is HKVVGMPALS…QINQPVCIIV (78 aa). Residue lysine 247 is modified to N6-lipoyllysine. Positions 295 to 338 are disordered; it reads YSVEEQSSSSSSSSQESTPSSSSSSSQESTPSQSSSQQTTRKSG. Residues 298–334 show a composition bias toward low complexity; sequence EEQSSSSSSSSQESTPSSSSSSSQESTPSQSSSQQTT. One can recognise a Peripheral subunit-binding (PSBD) domain in the interval 342-379; it reads FATPAARFEASSKGYDLSAINGTGPNNRILKADVLEFV. Positions 382–413 are disordered; sequence KQEVAQQQQQQTTTTTKKPTTPTSSGEFTDIP. The segment covering 387–404 has biased composition (low complexity); sequence QQQQQQTTTTTKKPTTPT. Positions 403–635 are catalytic; sequence PTSSGEFTDI…YVENPIKLIL (233 aa).

Belongs to the 2-oxoacid dehydrogenase family. 20 to 30 alpha(2)-beta(2) tetramers of E1 + 6 homodimers of E3 + 60 copies of E2. (R)-lipoate is required as a cofactor.

It localises to the mitochondrion matrix. The catalysed reaction is N(6)-[(R)-dihydrolipoyl]-L-lysyl-[protein] + acetyl-CoA = N(6)-[(R)-S(8)-acetyldihydrolipoyl]-L-lysyl-[protein] + CoA. The pyruvate dehydrogenase complex catalyzes the overall conversion of pyruvate to acetyl-CoA and CO(2). It contains multiple copies of three enzymatic components: pyruvate dehydrogenase (E1), dihydrolipoamide acetyltransferase (E2) and lipoamide dehydrogenase (E3). In Dictyostelium discoideum (Social amoeba), this protein is Dihydrolipoyllysine-residue acetyltransferase component of pyruvate dehydrogenase complex, mitochondrial (pdhC).